The following is a 288-amino-acid chain: Large ribosomal subunit protein uL2 (288 aa).

The segment covering 29 to 43 (PEKSLTRGFKRDKGR) has biased composition (basic and acidic residues). Disordered regions lie at residues 29–59 (PEKSLTRGFKRDKGRNNRGVITSRRRGGGHK) and 210–288 (GRNR…GRQS). Basic residues-rich tracts occupy residues 210–221 (GRNRWKGRRPKV) and 272–288 (VRRRKKSSKRGRGGRQS).

The protein belongs to the universal ribosomal protein uL2 family. Part of the 50S ribosomal subunit. Forms a bridge to the 30S subunit in the 70S ribosome.

In terms of biological role, one of the primary rRNA binding proteins. Required for association of the 30S and 50S subunits to form the 70S ribosome, for tRNA binding and peptide bond formation. It has been suggested to have peptidyltransferase activity; this is somewhat controversial. Makes several contacts with the 16S rRNA in the 70S ribosome. The chain is Large ribosomal subunit protein uL2 from Thermosynechococcus vestitus (strain NIES-2133 / IAM M-273 / BP-1).